The primary structure comprises 559 residues: Phenylalanine--tRNA ligase beta subunit (559 aa).

In terms of domain architecture, B5 spans 274–350 (FEPKIIDVHT…LGYGFNELPA (77 aa)). The Mg(2+) site is built by Asp-328, Asp-334, Glu-337, and Asn-338.

It belongs to the phenylalanyl-tRNA synthetase beta subunit family. Type 2 subfamily. Tetramer of two alpha and two beta subunits. Requires Mg(2+) as cofactor.

Its subcellular location is the cytoplasm. The catalysed reaction is tRNA(Phe) + L-phenylalanine + ATP = L-phenylalanyl-tRNA(Phe) + AMP + diphosphate + H(+). This chain is Phenylalanine--tRNA ligase beta subunit, found in Methanosphaera stadtmanae (strain ATCC 43021 / DSM 3091 / JCM 11832 / MCB-3).